We begin with the raw amino-acid sequence, 352 residues long: MVFRIASSPYTHNQRQTSRIMLLVVIAALPGIAAQTWFFGWGTLFQIVLAAITALVAEAIVLRLRKQSVASHLQDYSALLTGLLLAVSIPPLAPWWMVVLGTGFAIIIAKQLYGGLGQTPFNPAMIGYVVLLISFPVQMTSWLPPYEIAATTPDMLDTLRMIFTGHTASGGDMTLLRIGIDGISQATPLDTFKTSLRAGHSVEQIMQYPIYSGALAGVGWQWVNLAWLVGGVFLLWQKAIRWHIPVSFLLTLALCAALGWLFSPATLASPQLHLLSGATMLGAFFILTDPVTASTTNRGRLIFGALAGVLVWLIRSFGGYPDGVAFAVLLANITVPLIDYYTRPRVYGHRKG.

4 helical membrane-spanning segments follow: residues 20–40, 42–62, 69–91, and 123–143; these read IMLLVVIAALPGIAAQTWFFG, GTLFQIVLAAITALVAEAIVL, VASHLQDYSALLTGLLLAVSIPP, and PAMIGYVVLLISFPVQMTSWL. The residue at position 187 (Thr187) is an FMN phosphoryl threonine. A run of 5 helical transmembrane segments spans residues 215-235, 242-262, 267-287, 301-321, and 322-342; these read LAGVGWQWVNLAWLVGGVFLL, WHIPVSFLLTLALCAALGWLF, LASPQLHLLSGATMLGAFFIL, LIFGALAGVLVWLIRSFGGYP, and DGVAFAVLLANITVPLIDYYT.

It belongs to the NqrB/RnfD family. The complex is composed of six subunits: RsxA, RsxB, RsxC, RsxD, RsxE and RsxG. Requires FMN as cofactor.

It is found in the cell inner membrane. In terms of biological role, part of a membrane-bound complex that couples electron transfer with translocation of ions across the membrane. Required to maintain the reduced state of SoxR. This is Ion-translocating oxidoreductase complex subunit D from Salmonella dublin (strain CT_02021853).